A 276-amino-acid polypeptide reads, in one-letter code: CTD small phosphatase-like protein (276 aa).

Residues 1–25 (MDGPAIITQVTNPKEDEGRLPGAGE) are disordered. Positions 102–260 (LDYGKKCVVI…LDLIPFFEGL (159 aa)) constitute an FCP1 homology domain. The active-site 4-aspartylphosphate intermediate is Asp-112. Positions 112, 114, and 223 each coordinate Mg(2+). Catalysis depends on Asp-114, which acts as the Proton donor.

In terms of assembly, interacts with REST. Monomer. It depends on Mg(2+) as a cofactor. As to expression, expression is restricted to non-neuronal tissues.

It is found in the nucleus. The catalysed reaction is O-phospho-L-seryl-[protein] + H2O = L-seryl-[protein] + phosphate. The enzyme catalyses O-phospho-L-threonyl-[protein] + H2O = L-threonyl-[protein] + phosphate. Recruited by REST to neuronal genes that contain RE-1 elements, leading to neuronal gene silencing in non-neuronal cells. Preferentially catalyzes the dephosphorylation of 'Ser-5' within the tandem 7 residue repeats in the C-terminal domain (CTD) of the largest RNA polymerase II subunit POLR2A. Negatively regulates RNA polymerase II transcription, possibly by controlling the transition from initiation/capping to processive transcript elongation. The chain is CTD small phosphatase-like protein (CTDSPL) from Homo sapiens (Human).